Here is a 1939-residue protein sequence, read N- to C-terminus: Myosin-6 (1939 aa).

Residues 32 to 81 form the Myosin N-terminal SH3-like domain; the sequence is DIRTECFVPDDKEEFVKAKIVSREGGKVTAETENGKTVTVKEDQVMQQNP. The Myosin motor domain maps to 85–780; sequence DKIEDMAMLT…LLGLLEEMRD (696 aa). The residue at position 129 (lysine 129) is an N6,N6,N6-trimethyllysine. 178 to 185 serves as a coordination point for ATP; that stretch reads GESGAGKT. At threonine 379 the chain carries Phosphothreonine. Serine 417 is modified (phosphoserine). Actin-binding regions lie at residues 657–679 and 759–773; these read LNKL…IPNE and KFGH…GLLG. The IQ domain maps to 783-812; it reads LSRIITRIQAQARGQLMRIEFKKMVERRDA. Residues 842 to 1939 are a coiled coil; sequence LKSAETEKEM…GAKQKMHDEE (1098 aa). Phosphoserine occurs at positions 1090 and 1139. The residue at position 1261 (tyrosine 1261) is a Phosphotyrosine. The residue at position 1271 (serine 1271) is a Phosphoserine. Phosphothreonine occurs at positions 1277 and 1284. At serine 1309 the chain carries Phosphoserine. Residue tyrosine 1310 is modified to Phosphotyrosine. Threonine 1311 carries the phosphothreonine modification. Serine 1512 bears the Phosphoserine mark. Phosphothreonine occurs at positions 1515 and 1681. The interval 1908-1939 is disordered; sequence AEERADIAESQVNKLRAKSRDIGAKQKMHDEE. Residues 1925–1939 are compositionally biased toward basic and acidic residues; sequence KSRDIGAKQKMHDEE.

The protein belongs to the TRAFAC class myosin-kinesin ATPase superfamily. Myosin family. In terms of assembly, muscle myosin is a hexameric protein that consists of 2 heavy chain subunits (MHC), 2 alkali light chain subunits (MLC) and 2 regulatory light chain subunits (MLC-2).

The protein localises to the cytoplasm. It localises to the myofibril. In terms of biological role, muscle contraction. The sequence is that of Myosin-6 (MYH6) from Mesocricetus auratus (Golden hamster).